A 268-amino-acid polypeptide reads, in one-letter code: Hydroxypyruvate/pyruvate aldolase (268 aa).

His-48 (proton acceptor) is an active-site residue. 2 residues coordinate a divalent metal cation: Glu-152 and Asp-178.

The protein belongs to the HpcH/HpaI aldolase family. Requires Mn(2+) as cofactor. Mg(2+) is required as a cofactor. Co(2+) serves as cofactor.

The catalysed reaction is D-glyceraldehyde + 3-hydroxypyruvate = (3R,4S,5R)-3,4,5,6-tetrahydroxy-2-oxohexanoate. The enzyme catalyses D-glyceraldehyde + 3-hydroxypyruvate = 2-dehydro-D-gluconate. It catalyses the reaction D-glyceraldehyde + 3-hydroxypyruvate = 2-dehydro-D-galactonate. It carries out the reaction D-glyceraldehyde + pyruvate = 2-dehydro-3-deoxy-L-galactonate. The catalysed reaction is 2-dehydro-3-deoxy-D-gluconate = D-glyceraldehyde + pyruvate. Its function is as follows. Aldolase which can catalyze in vitro the aldolisation reaction between hydroxypyruvate (HPA) or pyruvate (PA) and D-glyceraldehyde (D-GA). The condensation of hydroxypyruvate and D-glyceraldehyde produces (3R,4S,5R)-3,4,5,6-tetrahydroxy-2-oxohexanoate as the major product, 2-dehydro-D-gluconate and 2-dehydro-D-galactonate. The condensation of pyruvate and D-glyceraldehyde produces 2-dehydro-3-deoxy-L-galactonate as the major product and 2-dehydro-3-deoxy-D-gluconate. Also catalyzes the retro-aldol type decarboxylation of oxaloacetate, a general property of known pyruvate aldolases. The polypeptide is Hydroxypyruvate/pyruvate aldolase (Pseudomonas aeruginosa).